We begin with the raw amino-acid sequence, 349 residues long: Lipoyl synthase (349 aa).

Cysteine 55, cysteine 60, cysteine 66, cysteine 81, cysteine 85, cysteine 88, and serine 292 together coordinate [4Fe-4S] cluster. The Radical SAM core domain maps to 67–281 (WESREATFLI…ADFARELGFG (215 aa)).

Belongs to the radical SAM superfamily. Lipoyl synthase family. It depends on [4Fe-4S] cluster as a cofactor.

The protein localises to the cytoplasm. The enzyme catalyses [[Fe-S] cluster scaffold protein carrying a second [4Fe-4S](2+) cluster] + N(6)-octanoyl-L-lysyl-[protein] + 2 oxidized [2Fe-2S]-[ferredoxin] + 2 S-adenosyl-L-methionine + 4 H(+) = [[Fe-S] cluster scaffold protein] + N(6)-[(R)-dihydrolipoyl]-L-lysyl-[protein] + 4 Fe(3+) + 2 hydrogen sulfide + 2 5'-deoxyadenosine + 2 L-methionine + 2 reduced [2Fe-2S]-[ferredoxin]. The protein operates within protein modification; protein lipoylation via endogenous pathway; protein N(6)-(lipoyl)lysine from octanoyl-[acyl-carrier-protein]: step 2/2. In terms of biological role, catalyzes the radical-mediated insertion of two sulfur atoms into the C-6 and C-8 positions of the octanoyl moiety bound to the lipoyl domains of lipoate-dependent enzymes, thereby converting the octanoylated domains into lipoylated derivatives. The sequence is that of Lipoyl synthase from Corynebacterium diphtheriae (strain ATCC 700971 / NCTC 13129 / Biotype gravis).